Here is a 328-residue protein sequence, read N- to C-terminus: GMP reductase (328 aa).

Cysteine 176 acts as the Thioimidate intermediate in catalysis. Residue 205-228 coordinates NADP(+); sequence IIADGGIRTHGDVAKSIRFGATMV.

It belongs to the IMPDH/GMPR family. GuaC type 2 subfamily.

It catalyses the reaction IMP + NH4(+) + NADP(+) = GMP + NADPH + 2 H(+). Catalyzes the irreversible NADPH-dependent deamination of GMP to IMP. It functions in the conversion of nucleobase, nucleoside and nucleotide derivatives of G to A nucleotides, and in maintaining the intracellular balance of A and G nucleotides. This chain is GMP reductase, found in Bacillus thuringiensis (strain Al Hakam).